The chain runs to 1672 residues: Probable outer membrane protein PmpB (1672 aa).

Positions 1-14 are cleaved as a signal peptide; sequence MSSMKWLSATAVFA. 4 disordered regions span residues 69-122, 203-263, 384-415, and 734-765; these read IPVK…GGAF, NTAE…GSGG, EAQT…AKGG, and STGV…PAPA. 3 stretches are compositionally biased toward low complexity: residues 77–88, 100–111, and 203–234; these read DDSSTSTPTTSS, SSSSSPNSGDTS, and NTAE…SKVQ. 2 stretches are compositionally biased toward polar residues: residues 235 to 256 and 384 to 399; these read SLFT…QTPS and EAQT…SQSG. The span at 734–744 shows a compositional bias: low complexity; the sequence is STGVATTATTS. Residues 1379 to 1672 enclose the Autotransporter domain; sequence DDAAYNNFWV…MTSCGARMIF (294 aa).

It belongs to the PMP outer membrane protein family.

It is found in the secreted. It localises to the cell wall. Its subcellular location is the cell outer membrane. This Chlamydia muridarum (strain MoPn / Nigg) protein is Probable outer membrane protein PmpB (pmpB).